Here is a 520-residue protein sequence, read N- to C-terminus: Ribonuclease Y (520 aa).

The helical transmembrane segment at 5–25 threads the bilayer; that stretch reads ITIISSLLFLIVGLVVGSLIF. The tract at residues 70 to 127 is disordered; that stretch reads RTEIENELRGRRTETQKAENRLLQREENLDRKDTSLSKREATLERKEESISKRQQQIE. The KH domain occupies 210-273; it reads TVSVVTLPND…EIARIALEKL (64 aa). Residues 336–429 form the HD domain; that stretch reads VLNHSLEVSK…VAAADALSAA (94 aa).

This sequence belongs to the RNase Y family.

Its subcellular location is the cell membrane. Its function is as follows. Endoribonuclease that initiates mRNA decay. The polypeptide is Ribonuclease Y (Listeria welshimeri serovar 6b (strain ATCC 35897 / DSM 20650 / CCUG 15529 / CIP 8149 / NCTC 11857 / SLCC 5334 / V8)).